We begin with the raw amino-acid sequence, 880 residues long: Alanine--tRNA ligase (880 aa).

His-566, His-570, Cys-668, and His-672 together coordinate Zn(2+).

This sequence belongs to the class-II aminoacyl-tRNA synthetase family. Zn(2+) is required as a cofactor.

The protein localises to the cytoplasm. It catalyses the reaction tRNA(Ala) + L-alanine + ATP = L-alanyl-tRNA(Ala) + AMP + diphosphate. In terms of biological role, catalyzes the attachment of alanine to tRNA(Ala) in a two-step reaction: alanine is first activated by ATP to form Ala-AMP and then transferred to the acceptor end of tRNA(Ala). Also edits incorrectly charged Ser-tRNA(Ala) and Gly-tRNA(Ala) via its editing domain. This Nostoc sp. (strain PCC 7120 / SAG 25.82 / UTEX 2576) protein is Alanine--tRNA ligase.